Here is a 427-residue protein sequence, read N- to C-terminus: 3-phosphoshikimate 1-carboxyvinyltransferase (427 aa).

3-phosphoshikimate is bound by residues Lys-22, Ser-23, and Arg-27. A phosphoenolpyruvate-binding site is contributed by Lys-22. Gly-96 and Arg-124 together coordinate phosphoenolpyruvate. Positions 169, 170, 171, 197, 313, 336, and 340 each coordinate 3-phosphoshikimate. Position 171 (Gln-171) interacts with phosphoenolpyruvate. The Proton acceptor role is filled by Asp-313. Phosphoenolpyruvate is bound by residues Arg-344, Arg-386, and Lys-411.

Belongs to the EPSP synthase family. Monomer.

Its subcellular location is the cytoplasm. The catalysed reaction is 3-phosphoshikimate + phosphoenolpyruvate = 5-O-(1-carboxyvinyl)-3-phosphoshikimate + phosphate. It functions in the pathway metabolic intermediate biosynthesis; chorismate biosynthesis; chorismate from D-erythrose 4-phosphate and phosphoenolpyruvate: step 6/7. In terms of biological role, catalyzes the transfer of the enolpyruvyl moiety of phosphoenolpyruvate (PEP) to the 5-hydroxyl of shikimate-3-phosphate (S3P) to produce enolpyruvyl shikimate-3-phosphate and inorganic phosphate. The protein is 3-phosphoshikimate 1-carboxyvinyltransferase of Klebsiella pneumoniae (strain 342).